The primary structure comprises 341 residues: MNIQQALARVVAGNDLSQDEMVEVMTAVMSGQATPAQIGGFLVALRMKSESLDEITGAAMVMRELATKVEVSANNLVDTCGTGGDGANLFNVSTAAAFVVAAAGGHVAKHGNRSVSSSTGSADVLEAAGVNLSAAPDVVARAIENVGVGFMFAPAHHSAMKHAIGPRKELALRTIFNMLGPMTNPAGVKRQVIGVFTPALCRPMAEVLGRLGSEHVMIVCSDDGLDELSIAAPSHVAELKNGVVTEFKVDPADYGFGYSDLDGLSVTSAEESLGLIRGAFKGDTTELSQKAAAIIAINAGAAIYVAGLAGSMKDGVAMAEDALSSGLAAEKLKELIEFTNV.

5-phospho-alpha-D-ribose 1-diphosphate contacts are provided by residues G81, 84 to 85 (GD), 91 to 94 (NVST), 109 to 117 (KHGNRSVSS), and S121. G81 contributes to the anthranilate binding site. S93 is a binding site for Mg(2+). N112 contributes to the anthranilate binding site. Position 167 (R167) interacts with anthranilate. Residues D226 and E227 each contribute to the Mg(2+) site.

The protein belongs to the anthranilate phosphoribosyltransferase family. As to quaternary structure, homodimer. The cofactor is Mg(2+).

The enzyme catalyses N-(5-phospho-beta-D-ribosyl)anthranilate + diphosphate = 5-phospho-alpha-D-ribose 1-diphosphate + anthranilate. It functions in the pathway amino-acid biosynthesis; L-tryptophan biosynthesis; L-tryptophan from chorismate: step 2/5. Catalyzes the transfer of the phosphoribosyl group of 5-phosphorylribose-1-pyrophosphate (PRPP) to anthranilate to yield N-(5'-phosphoribosyl)-anthranilate (PRA). The polypeptide is Anthranilate phosphoribosyltransferase (Teredinibacter turnerae (strain ATCC 39867 / T7901)).